The following is a 160-amino-acid chain: Cyclic pyranopterin monophosphate synthase (160 aa).

Substrate is bound by residues 75–77 (LCH) and 113–114 (ME). Asp128 is a catalytic residue.

The protein belongs to the MoaC family. Homohexamer; trimer of dimers.

The enzyme catalyses (8S)-3',8-cyclo-7,8-dihydroguanosine 5'-triphosphate = cyclic pyranopterin phosphate + diphosphate. The protein operates within cofactor biosynthesis; molybdopterin biosynthesis. Catalyzes the conversion of (8S)-3',8-cyclo-7,8-dihydroguanosine 5'-triphosphate to cyclic pyranopterin monophosphate (cPMP). This Beijerinckia indica subsp. indica (strain ATCC 9039 / DSM 1715 / NCIMB 8712) protein is Cyclic pyranopterin monophosphate synthase.